The chain runs to 1089 residues: Carbamoyl phosphate synthase large chain (1089 aa).

The tract at residues 1-399 (MPKRTDIKSI…SIQKALCSLE (399 aa)) is carboxyphosphate synthetic domain. ATP contacts are provided by R127, R167, G173, G174, E206, L208, E213, G239, V240, H241, Q283, and E297. An ATP-grasp 1 domain is found at 131–326 (KECMKKIGMD…IAKVATLLAV (196 aa)). Residues Q283, E297, and N299 each contribute to the Mg(2+) site. Mn(2+) contacts are provided by Q283, E297, and N299. The interval 400–553 (RSLSGFDRVK…NVSELTQSKN (154 aa)) is oligomerization domain. Residues 554 to 951 (DAKDKKEKKV…SYAKSQIASF (398 aa)) form a carbamoyl phosphate synthetic domain region. An ATP-grasp 2 domain is found at 680 to 871 (AEFITKLGIN…LAKVATRVMW (192 aa)). ATP-binding residues include R716, Q755, L757, E762, G787, I788, H789, S790, Q830, and E842. Mg(2+)-binding residues include Q830, E842, and N844. Mn(2+) is bound by residues Q830, E842, and N844. Positions 952-1089 (NHLPEQGVVF…VKSLQEWLKS (138 aa)) constitute an MGS-like domain. Residues 952-1089 (NHLPEQGVVF…VKSLQEWLKS (138 aa)) form an allosteric domain region.

It belongs to the CarB family. In terms of assembly, composed of two chains; the small (or glutamine) chain promotes the hydrolysis of glutamine to ammonia, which is used by the large (or ammonia) chain to synthesize carbamoyl phosphate. Tetramer of heterodimers (alpha,beta)4. Requires Mg(2+) as cofactor. Mn(2+) is required as a cofactor.

It catalyses the reaction hydrogencarbonate + L-glutamine + 2 ATP + H2O = carbamoyl phosphate + L-glutamate + 2 ADP + phosphate + 2 H(+). The enzyme catalyses hydrogencarbonate + NH4(+) + 2 ATP = carbamoyl phosphate + 2 ADP + phosphate + 2 H(+). It participates in amino-acid biosynthesis; L-arginine biosynthesis; carbamoyl phosphate from bicarbonate: step 1/1. The protein operates within pyrimidine metabolism; UMP biosynthesis via de novo pathway; (S)-dihydroorotate from bicarbonate: step 1/3. Its function is as follows. Large subunit of the glutamine-dependent carbamoyl phosphate synthetase (CPSase). CPSase catalyzes the formation of carbamoyl phosphate from the ammonia moiety of glutamine, carbonate, and phosphate donated by ATP, constituting the first step of 2 biosynthetic pathways, one leading to arginine and/or urea and the other to pyrimidine nucleotides. The large subunit (synthetase) binds the substrates ammonia (free or transferred from glutamine from the small subunit), hydrogencarbonate and ATP and carries out an ATP-coupled ligase reaction, activating hydrogencarbonate by forming carboxy phosphate which reacts with ammonia to form carbamoyl phosphate. This is Carbamoyl phosphate synthase large chain from Campylobacter jejuni subsp. jejuni serotype O:2 (strain ATCC 700819 / NCTC 11168).